The sequence spans 261 residues: Type III pantothenate kinase (261 aa).

7–14 (EQGNTNTM) contacts ATP. Substrate is bound at residue 108–111 (GADR). Aspartate 110 (proton acceptor) is an active-site residue. K(+) is bound at residue aspartate 130. Threonine 133 is an ATP binding site. Position 187 (threonine 187) interacts with substrate.

This sequence belongs to the type III pantothenate kinase family. Homodimer. NH4(+) serves as cofactor. The cofactor is K(+).

The protein localises to the cytoplasm. It catalyses the reaction (R)-pantothenate + ATP = (R)-4'-phosphopantothenate + ADP + H(+). It participates in cofactor biosynthesis; coenzyme A biosynthesis; CoA from (R)-pantothenate: step 1/5. In terms of biological role, catalyzes the phosphorylation of pantothenate (Pan), the first step in CoA biosynthesis. This chain is Type III pantothenate kinase, found in Caulobacter vibrioides (strain ATCC 19089 / CIP 103742 / CB 15) (Caulobacter crescentus).